The following is a 178-amino-acid chain: Interleukin-10 (178 aa).

The signal sequence occupies residues 1 to 18 (MPGSALLCCLLLLTGMRI). Asn29 is a glycosylation site (N-linked (GlcNAc...) asparagine). 2 disulfide bridges follow: Cys30/Cys126 and Cys80/Cys132. Asn134 carries an N-linked (GlcNAc...) asparagine glycan.

This sequence belongs to the IL-10 family. As to quaternary structure, homodimer. Interacts with IL10RA and IL10RB.

The protein localises to the secreted. Major immune regulatory cytokine that acts on many cells of the immune system where it has profound anti-inflammatory functions, limiting excessive tissue disruption caused by inflammation. Mechanistically, IL10 binds to its heterotetrameric receptor comprising IL10RA and IL10RB leading to JAK1 and STAT2-mediated phosphorylation of STAT3. In turn, STAT3 translocates to the nucleus where it drives expression of anti-inflammatory mediators. Targets antigen-presenting cells (APCs) such as macrophages and monocytes and inhibits their release of pro-inflammatory cytokines including granulocyte-macrophage colony-stimulating factor /GM-CSF, granulocyte colony-stimulating factor/G-CSF, IL-1 alpha, IL-1 beta, IL-6, IL-8 and TNF-alpha. Also interferes with antigen presentation by reducing the expression of MHC-class II and co-stimulatory molecules, thereby inhibiting their ability to induce T cell activation. In addition, controls the inflammatory response of macrophages by reprogramming essential metabolic pathways including mTOR signaling. The polypeptide is Interleukin-10 (Il10) (Mus musculus (Mouse)).